Consider the following 100-residue polypeptide: Carboxysome shell vertex protein CcmL (100 aa).

In terms of domain architecture, BMV spans 1–83; that stretch reads MQLAKVLGTV…LDAMVVGIID (83 aa).

Belongs to the CcmL/EutN family. CcmL subfamily. Homopentamer. Interacts with full-length CcmM.

It is found in the carboxysome. Functionally, probably forms vertices in the carboxysome, a polyhedral inclusion where RuBisCO (ribulose bisphosphate carboxylase, rbcL-rbcS) is sequestered. Has been modeled to induce curvature upon insertion into an otherwise flat hexagonal molecular layer of CcmK subunits. This is Carboxysome shell vertex protein CcmL from Synechocystis sp. (strain ATCC 27184 / PCC 6803 / Kazusa).